The following is a 547-amino-acid chain: Rho GTPase-activating protein 36 (547 aa).

The signal sequence occupies residues 1–40; it reads MGGCIPFLKAARALCPRIMPPLLLLSAFIFLVSVLGGAPG. The Rho-GAP domain maps to 226-426; the sequence is MSLNPIAKQI…AMIDNWDVLF (201 aa). The segment at 485 to 547 is disordered; that stretch reads AVLAQSKPSD…AKTGVSYFFP (63 aa). The span at 524-539 shows a compositional bias: basic and acidic residues; it reads EQDRPLLRVPREKEAK.

May interacts (via the Rho-GAP domain) with the active form of RAC1. In terms of tissue distribution, detected in the outer root sheath of hair follicles at the level of the stem cell bulge, during the anagen and telogen phases of hair growth (at protein level).

Its function is as follows. GTPase activator for the Rho-type GTPases by converting them to an inactive GDP-bound state. The polypeptide is Rho GTPase-activating protein 36 (ARHGAP36) (Homo sapiens (Human)).